Reading from the N-terminus, the 426-residue chain is Alpha-ionylideneethane synthase abl3 (426 aa).

It belongs to the alpha-ionylideneethane synthase family.

It functions in the pathway hormone biosynthesis. Functionally, alpha-ionylideneethane synthase; part of the gene cluster that mediates the biosynthesis of abscisic acid (ABA), a phytohormone that acts antagonistically toward salicylic acid (SA), jasmonic acid (JA) and ethylene (ETH) signaling, to impede plant defense responses. The first step of the pathway catalyzes the reaction from farnesyl diphosphate to alpha-ionylideneethane performed by the alpha-ionylideneethane synthase abl3 via a three-step reaction mechanism involving 2 neutral intermediates, beta-farnesene and allofarnesene. The cytochrome P450 monooxygenase abl1 might then be involved in the conversion of alpha-ionylideneethane to alpha-ionylideneacetic acid. Alpha-ionylideneacetic acid is further converted to abscisic acid in 2 steps involving the cytochrome P450 monooxygenase abl2 and the short-chain dehydrogenase/reductase abl4, via the intermediates 1'-deoxy-ABA or 1',4'-trans-diol-ABA, depending on the order of action of these 2 enzymes. Abl2 is responsible for the hydroxylation of carbon atom C-1' and abl4 might be involved in the oxidation of the C-4' carbon atom. The polypeptide is Alpha-ionylideneethane synthase abl3 (Leptosphaeria maculans (strain JN3 / isolate v23.1.3 / race Av1-4-5-6-7-8) (Blackleg fungus)).